The primary structure comprises 206 residues: Tektin bundle-interacting protein 1 (206 aa).

In terms of assembly, microtubule inner protein component of sperm flagellar doublet microtubules.

Its subcellular location is the cytoplasm. The protein resides in the cytoskeleton. It is found in the cilium axoneme. The protein localises to the flagellum axoneme. Microtubule inner protein (MIP) part of the dynein-decorated doublet microtubules (DMTs) in cilia axoneme, which is required for motile cilia beating. Located at the center of the tektin bundle where may function to recruit tektins or stabilize the bundle. The chain is Tektin bundle-interacting protein 1 from Mus musculus (Mouse).